Consider the following 448-residue polypeptide: tRNA-2-methylthio-N(6)-dimethylallyladenosine synthase (448 aa).

Residues 3 to 119 (GRVYVKTHGC…LPEMIDRARD (117 aa)) enclose the MTTase N-terminal domain. [4Fe-4S] cluster contacts are provided by Cys-12, Cys-49, Cys-82, Cys-156, Cys-160, and Cys-163. The Radical SAM core domain occupies 142 to 374 (RAEGPTAFVS…QETINANARR (233 aa)). In terms of domain architecture, TRAM spans 377–440 (ESMVGTVQRV…PNSLRGELLG (64 aa)).

The protein belongs to the methylthiotransferase family. MiaB subfamily. As to quaternary structure, monomer. It depends on [4Fe-4S] cluster as a cofactor.

The protein localises to the cytoplasm. It catalyses the reaction N(6)-dimethylallyladenosine(37) in tRNA + (sulfur carrier)-SH + AH2 + 2 S-adenosyl-L-methionine = 2-methylsulfanyl-N(6)-dimethylallyladenosine(37) in tRNA + (sulfur carrier)-H + 5'-deoxyadenosine + L-methionine + A + S-adenosyl-L-homocysteine + 2 H(+). Its function is as follows. Catalyzes the methylthiolation of N6-(dimethylallyl)adenosine (i(6)A), leading to the formation of 2-methylthio-N6-(dimethylallyl)adenosine (ms(2)i(6)A) at position 37 in tRNAs that read codons beginning with uridine. In Alkalilimnicola ehrlichii (strain ATCC BAA-1101 / DSM 17681 / MLHE-1), this protein is tRNA-2-methylthio-N(6)-dimethylallyladenosine synthase.